Reading from the N-terminus, the 207-residue chain is MSYSLPSLPYAYDALEPHFDKQTMEIHHTKHHQTYVNNANTVLESFPELAKFSVEDLIKDLDKVPAEKRTFMRNNAGGHANHSLFWKGLKLGTTLTGDLKAAIERDFGSVDSFKEKFEAAAATRFGSGWAWLVLKDDGKLAVVSTANQDSPLMGEAVSGASGFPIVGLDVWEHAYYLKFQNRRPDYIKAFWNVVNWDEAAARFAQAK.

H27, H82, D169, and H173 together coordinate Mn(2+).

It belongs to the iron/manganese superoxide dismutase family. Mn(2+) is required as a cofactor.

The enzyme catalyses 2 superoxide + 2 H(+) = H2O2 + O2. In terms of biological role, destroys superoxide anion radicals which are normally produced within the cells and which are toxic to biological systems. The sequence is that of Superoxide dismutase [Mn] (sodA) from Yersinia enterocolitica.